Consider the following 206-residue polypeptide: Small ribosomal subunit protein uS4 (206 aa).

In terms of domain architecture, S4 RNA-binding spans 98–155; sequence TRLDNVVYRLGWALSRDQARQLVSHGKIAVNGKRVNIPSYNLKPGDVVELLDKDLIPV.

The protein belongs to the universal ribosomal protein uS4 family. As to quaternary structure, part of the 30S ribosomal subunit. Contacts protein S5. The interaction surface between S4 and S5 is involved in control of translational fidelity.

One of the primary rRNA binding proteins, it binds directly to 16S rRNA where it nucleates assembly of the body of the 30S subunit. In terms of biological role, with S5 and S12 plays an important role in translational accuracy. This Dictyoglomus thermophilum (strain ATCC 35947 / DSM 3960 / H-6-12) protein is Small ribosomal subunit protein uS4.